The primary structure comprises 419 residues: L-rhamnose isomerase (419 aa).

The Mn(2+) site is built by H262, D294, and D296.

Belongs to the rhamnose isomerase family. As to quaternary structure, homotetramer. Mn(2+) is required as a cofactor.

It localises to the cytoplasm. It catalyses the reaction L-rhamnopyranose = L-rhamnulose. Its pathway is carbohydrate degradation; L-rhamnose degradation; glycerone phosphate from L-rhamnose: step 1/3. In terms of biological role, catalyzes the interconversion of L-rhamnose and L-rhamnulose. The polypeptide is L-rhamnose isomerase (Salmonella paratyphi A (strain AKU_12601)).